We begin with the raw amino-acid sequence, 209 residues long: Ribosomal RNA small subunit methyltransferase G (209 aa).

S-adenosyl-L-methionine contacts are provided by residues Gly-72, Leu-77, 123–124 (AE), and Arg-138.

It belongs to the methyltransferase superfamily. RNA methyltransferase RsmG family.

Its subcellular location is the cytoplasm. Its function is as follows. Specifically methylates the N7 position of guanine in position 518 of 16S rRNA. This Leifsonia xyli subsp. xyli (strain CTCB07) protein is Ribosomal RNA small subunit methyltransferase G.